The chain runs to 345 residues: MSRYQEAGVDIHAGYELVNKIKKDVKSTRRVGTTGNIGSFGGTFDLSVLNIKEPVLVSGTDGVGTKLLIAQKMDKHDTIGIDCVAMCVNDILAQGAEPLYFLDYIATGKNDPDKIAQIVAGVAEGCRQAGTALIGGETAEMPDMYAKDEYDLAGFSSGVVEKSKLLTDANPQENDILIGLASSGIHSNGFSLVRQILFKDNKIDLSEKREEFGGKTIGEVILEPTRIYIDSVLPLVKENLVNGIAHITGGGLIENLPRMFADDLTAEIDASSWKVLPIFEYLKKLGNLSQDDCYETFNMGIGMVLAVSEDKLESVKKLLSDKDEDFYIIGNLRKRKGNEEKIIVH.

The protein belongs to the AIR synthase family.

It localises to the cytoplasm. The catalysed reaction is 2-formamido-N(1)-(5-O-phospho-beta-D-ribosyl)acetamidine + ATP = 5-amino-1-(5-phospho-beta-D-ribosyl)imidazole + ADP + phosphate + H(+). The protein operates within purine metabolism; IMP biosynthesis via de novo pathway; 5-amino-1-(5-phospho-D-ribosyl)imidazole from N(2)-formyl-N(1)-(5-phospho-D-ribosyl)glycinamide: step 2/2. In Ligilactobacillus salivarius (strain UCC118) (Lactobacillus salivarius), this protein is Phosphoribosylformylglycinamidine cyclo-ligase.